We begin with the raw amino-acid sequence, 353 residues long: 4-hydroxy-2-oxovalerate aldolase 2 (353 aa).

One can recognise a Pyruvate carboxyltransferase domain in the interval 14 to 266; the sequence is VRMTDTSLRD…KTGIDFFDIA (253 aa). Substrate is bound at residue 22-23; sequence RD. D23 serves as a coordination point for Mn(2+). The active-site Proton acceptor is the H26. Substrate is bound by residues S176 and H205. Mn(2+) is bound by residues H205 and H207. Position 296 (Y296) interacts with substrate.

This sequence belongs to the 4-hydroxy-2-oxovalerate aldolase family.

The catalysed reaction is (S)-4-hydroxy-2-oxopentanoate = acetaldehyde + pyruvate. This chain is 4-hydroxy-2-oxovalerate aldolase 2, found in Mycobacterium sp. (strain JLS).